Here is a 133-residue protein sequence, read N- to C-terminus: DUF35 domain-containing scaffold protein (133 aa).

Zn(2+)-binding residues include Cys-23, Cys-26, Cys-37, and Cys-40.

It belongs to the scaffold protein DUF35 family. As to quaternary structure, interacts with acetoacetyl-CoA thiolase and HMG-CoA synthase (HMGCS) that catalyzes the first and second step in the mevalonate pathway, respectively.

In terms of biological role, functions as a scaffold to connect the acetoacetyl-CoA thiolase and HMG-CoA synthase (HMGCS) dimers in the channeling thiolase/HMGCS complex, which allows for efficient coupling of the endergonic thiolase reaction with the exergonic HMGCS reaction. The chain is DUF35 domain-containing scaffold protein from Methanothermobacter thermautotrophicus (strain ATCC 29096 / DSM 1053 / JCM 10044 / NBRC 100330 / Delta H) (Methanobacterium thermoautotrophicum).